We begin with the raw amino-acid sequence, 502 residues long: Biotin biosynthesis bifunctional protein BioHC (502 aa).

The segment at 1-224 (MTRPVLVLVH…IHVIAGSAHA (224 aa)) is carboxylesterase. Tryptophan 12 is a binding site for substrate. Serine 72 functions as the Nucleophile in the catalytic mechanism. A substrate-binding site is contributed by 134–138 (FTGLL). Active-site residues include aspartate 195 and histidine 223. Histidine 223 contributes to the substrate binding site. A malonyl-ACP O-methyltransferase region spans residues 225–502 (VHWSQPQQLI…EVYYLVLCKP (278 aa)).

The protein in the N-terminal section; belongs to the AB hydrolase superfamily. Carboxylesterase BioH family. In the C-terminal section; belongs to the methyltransferase superfamily.

The catalysed reaction is a carboxylic ester + H2O = an alcohol + a carboxylate + H(+). The enzyme catalyses malonyl-[ACP] + S-adenosyl-L-methionine = malonyl-[ACP] methyl ester + S-adenosyl-L-homocysteine. The protein operates within cofactor biosynthesis; biotin biosynthesis. Functionally, converts the free carboxyl group of a malonyl-thioester to its methyl ester by transfer of a methyl group from S-adenosyl-L-methionine (SAM). It allows to synthesize pimeloyl-ACP via the fatty acid synthetic pathway. In terms of biological role, the physiological role of BioH is to remove the methyl group introduced by BioC when the pimeloyl moiety is complete. It allows to synthesize pimeloyl-ACP via the fatty acid synthetic pathway through the hydrolysis of the ester bonds of pimeloyl-ACP esters. The polypeptide is Biotin biosynthesis bifunctional protein BioHC (bioC) (Cellvibrio japonicus (strain Ueda107) (Pseudomonas fluorescens subsp. cellulosa)).